A 218-amino-acid chain; its full sequence is tRNA (cytidine(56)-2'-O)-methyltransferase (218 aa).

S-adenosyl-L-methionine is bound by residues L81, 106–110 (GAEKV), and 124–131 (IGNQPHSE). The tract at residues 170–218 (KVGEEGPSGGAPGVRAERGRGGRGEGVQGADEVRGHKRGATDRDLGDET) is disordered. Residues 200–218 (DEVRGHKRGATDRDLGDET) are compositionally biased toward basic and acidic residues.

Belongs to the aTrm56 family. Homodimer.

The protein resides in the cytoplasm. It carries out the reaction cytidine(56) in tRNA + S-adenosyl-L-methionine = 2'-O-methylcytidine(56) in tRNA + S-adenosyl-L-homocysteine + H(+). Functionally, specifically catalyzes the AdoMet-dependent 2'-O-ribose methylation of cytidine at position 56 in tRNAs. The chain is tRNA (cytidine(56)-2'-O)-methyltransferase from Ignicoccus hospitalis (strain KIN4/I / DSM 18386 / JCM 14125).